The following is a 419-amino-acid chain: UDP-N-acetylglucosamine 1-carboxyvinyltransferase (419 aa).

22–23 (KN) lines the phosphoenolpyruvate pocket. R95 contacts UDP-N-acetyl-alpha-D-glucosamine. C119 serves as the catalytic Proton donor. C119 is subject to 2-(S-cysteinyl)pyruvic acid O-phosphothioketal. Residues D308 and I330 each coordinate UDP-N-acetyl-alpha-D-glucosamine.

It belongs to the EPSP synthase family. MurA subfamily.

It is found in the cytoplasm. It carries out the reaction phosphoenolpyruvate + UDP-N-acetyl-alpha-D-glucosamine = UDP-N-acetyl-3-O-(1-carboxyvinyl)-alpha-D-glucosamine + phosphate. The protein operates within cell wall biogenesis; peptidoglycan biosynthesis. In terms of biological role, cell wall formation. Adds enolpyruvyl to UDP-N-acetylglucosamine. This chain is UDP-N-acetylglucosamine 1-carboxyvinyltransferase, found in Rickettsia bellii (strain OSU 85-389).